Here is a 251-residue protein sequence, read N- to C-terminus: Probable transcriptional regulatory protein BLD_0450 (251 aa).

It belongs to the TACO1 family.

Its subcellular location is the cytoplasm. This Bifidobacterium longum (strain DJO10A) protein is Probable transcriptional regulatory protein BLD_0450.